We begin with the raw amino-acid sequence, 333 residues long: 3-isopropylmalate/3-methylmalate dehydrogenase (333 aa).

Substrate is bound by residues R81, R91, R112, and D203. Mg(2+) contacts are provided by D203, D227, and D231. Position 260–272 (G260–N272) interacts with NAD(+).

Belongs to the isocitrate and isopropylmalate dehydrogenases family. Homotetramer. Requires Mg(2+) as cofactor. It depends on Mn(2+) as a cofactor.

The protein localises to the cytoplasm. It catalyses the reaction (2R,3S)-3-isopropylmalate + NAD(+) = 4-methyl-2-oxopentanoate + CO2 + NADH. It carries out the reaction (2R,3S)-3-methylmalate + NAD(+) = 2-oxobutanoate + CO2 + NADH. The catalysed reaction is (R)-malate + NAD(+) = pyruvate + CO2 + NADH. It participates in amino-acid biosynthesis; L-leucine biosynthesis; L-leucine from 3-methyl-2-oxobutanoate: step 3/4. The protein operates within amino-acid biosynthesis; L-isoleucine biosynthesis; 2-oxobutanoate from pyruvate: step 3/3. Functionally, catalyzes the oxidation of 3-carboxy-2-hydroxy-4-methylpentanoate (3-isopropylmalate) to 3-carboxy-4-methyl-2-oxopentanoate, which decarboxylates to 4-methyl-2-oxopentanoate (2-oxoisocaproate). Also catalyzes the oxidative decarboxylation of 3-methylmalate to 2-oxobutyrate, and that of D-malate to pyruvate. Cannot use NADP(+) instead of NAD(+). Cannot catalyze the oxidation of L-malate, L-tartrate, D-tartrate, DL-isocitrate, or DL-lactate. This chain is 3-isopropylmalate/3-methylmalate dehydrogenase (leuB), found in Methanocaldococcus jannaschii (strain ATCC 43067 / DSM 2661 / JAL-1 / JCM 10045 / NBRC 100440) (Methanococcus jannaschii).